A 301-amino-acid chain; its full sequence is Sulfate adenylyltransferase subunit 2 (301 aa).

The interval 279–301 is disordered; it reads RQGRMIDHDSSGSMEEKKKQGYF.

The protein belongs to the PAPS reductase family. CysD subfamily. Heterodimer composed of CysD, the smaller subunit, and CysN.

It catalyses the reaction sulfate + ATP + H(+) = adenosine 5'-phosphosulfate + diphosphate. It functions in the pathway sulfur metabolism; hydrogen sulfide biosynthesis; sulfite from sulfate: step 1/3. Its function is as follows. With CysN forms the ATP sulfurylase (ATPS) that catalyzes the adenylation of sulfate producing adenosine 5'-phosphosulfate (APS) and diphosphate, the first enzymatic step in sulfur assimilation pathway. APS synthesis involves the formation of a high-energy phosphoric-sulfuric acid anhydride bond driven by GTP hydrolysis by CysN coupled to ATP hydrolysis by CysD. This is Sulfate adenylyltransferase subunit 2 from Marinomonas sp. (strain MWYL1).